Consider the following 405-residue polypeptide: L-carnitine CoA-transferase (405 aa).

CoA contacts are provided by lysine 97 and arginine 104. Catalysis depends on aspartate 169, which acts as the Nucleophile.

This sequence belongs to the CoA-transferase III family. CaiB subfamily. In terms of assembly, homodimer.

Its subcellular location is the cytoplasm. It catalyses the reaction crotonobetainyl-CoA + (R)-carnitine = crotonobetaine + (R)-carnitinyl-CoA. The enzyme catalyses 4-(trimethylamino)butanoyl-CoA + (R)-carnitine = (R)-carnitinyl-CoA + 4-(trimethylamino)butanoate. It participates in amine and polyamine metabolism; carnitine metabolism. In terms of biological role, catalyzes the reversible transfer of the CoA moiety from gamma-butyrobetainyl-CoA to L-carnitine to generate L-carnitinyl-CoA and gamma-butyrobetaine. Is also able to catalyze the reversible transfer of the CoA moiety from gamma-butyrobetainyl-CoA or L-carnitinyl-CoA to crotonobetaine to generate crotonobetainyl-CoA. The chain is L-carnitine CoA-transferase from Escherichia coli O6:K15:H31 (strain 536 / UPEC).